Reading from the N-terminus, the 103-residue chain is Host transcription reprogramming factor 6 (103 aa).

A signal peptide spans 1-19 (MRATTAFQVIAFLAVGAAA). Residues 66–92 (YWCPNQVCAKTFATQEERDHHIANTVH) form a C2H2-type zinc finger. The disordered stretch occupies residues 82–103 (ERDHHIANTVHPTNSKRDVLLQ).

The protein resides in the secreted. Its subcellular location is the host nucleus. Functionally, probable secreted effector that translocates into the nuclei of host cells to reprogram the expression of targeted genes by binding on effector binding elements in rice. The polypeptide is Host transcription reprogramming factor 6 (Pyricularia oryzae (strain 70-15 / ATCC MYA-4617 / FGSC 8958) (Rice blast fungus)).